Consider the following 483-residue polypeptide: RNA-binding protein Nova-1 (483 aa).

The segment at 1 to 44 (MMAAAPIQQNGTHTGVPIDLDPPDSRKRPLEAPPEAGSTKRTNT) is disordered. The short motif at 27 to 43 (KRPLEAPPEAGSTKRTN) is the Bipartite nuclear localization signal element. KH domains are found at residues 49–116 (QYFL…HGFI), 147–213 (IKQV…VELI), and 397–464 (KDVV…QYLI). The segment at 395–479 (GSKDVVEIAV…YEQGVRAANP (85 aa)) is required for RNA binding.

As to quaternary structure, interacts with PTBP2; the interaction is direct.

The protein localises to the nucleus. Its function is as follows. Functions to regulate alternative splicing in neurons by binding pre-mRNA in a sequence-specific manner to activate exon inclusion or exclusion. It binds specifically to the sequences 5'-YCAY-3' and regulates splicing in only a subset of regulated exons. Binding to an exonic 5'-YCAY-3' cluster changes the protein complexes assembled on pre-mRNA, blocking U1 snRNP binding and exon inclusion, whereas binding to an intronic 5'-YCAY-3' cluster enhances spliceosome assembly and exon inclusion. Binding to 5'-YCAY-3' clusters results in a local and asymmetric action to regulate spliceosome assembly and alternative splicing in neurons. Binding to an exonic 5'-YCAY-3' cluster changed the protein complexes assembled on pre-mRNA, blocking U1 snRNP (small nuclear ribonucleoprotein) binding and exon inclusion, whereas binding to an intronic 5'-YCAY-3' cluster enhanced spliceosome assembly and exon inclusion. With NOVA1, they perform unique biological functions in different brain areas and cell types. Autoregulates its own expression by acting as a splicing repressor. Acts to activate the inclusion of exon E3A in the glycine receptor alpha-2 chain and of exon E9 in gamma-aminobutyric-acid receptor gamma-2 subunit via a distal downstream UCAU-rich intronic splicing enhancer. Acts to regulate a novel glycine receptor alpha-2 chain splice variant (alpha-2N) in developing spinal cord. This chain is RNA-binding protein Nova-1 (NOVA1), found in Macaca fascicularis (Crab-eating macaque).